A 163-amino-acid polypeptide reads, in one-letter code: MELKIGSTEAPMEKATFGAGCFWGVEAAFRKVKGVVSTSVGYMGGHFPNPCYLDVLSRITGHAEVVQIEYDPQLVSYEDLLAVFWDIHDPTTLNRQGPDKGEQYRSVIFFHNEQQAEAAQQSKAKVQVSGRFELDIVTEIKHKSEYYLATEEHQQYFEKQAKR.

The active site involves Cys21.

This sequence belongs to the MsrA Met sulfoxide reductase family.

The enzyme catalyses L-methionyl-[protein] + [thioredoxin]-disulfide + H2O = L-methionyl-(S)-S-oxide-[protein] + [thioredoxin]-dithiol. The catalysed reaction is [thioredoxin]-disulfide + L-methionine + H2O = L-methionine (S)-S-oxide + [thioredoxin]-dithiol. Functionally, has an important function as a repair enzyme for proteins that have been inactivated by oxidation. Catalyzes the reversible oxidation-reduction of methionine sulfoxide in proteins to methionine. The chain is Peptide methionine sulfoxide reductase MsrA 1 (msrA1) from Nostoc sp. (strain PCC 7120 / SAG 25.82 / UTEX 2576).